The sequence spans 886 residues: Alanine--tRNA ligase (886 aa).

4 residues coordinate Zn(2+): histidine 564, histidine 568, cysteine 666, and histidine 670.

Belongs to the class-II aminoacyl-tRNA synthetase family. Requires Zn(2+) as cofactor.

It localises to the cytoplasm. It catalyses the reaction tRNA(Ala) + L-alanine + ATP = L-alanyl-tRNA(Ala) + AMP + diphosphate. Catalyzes the attachment of alanine to tRNA(Ala) in a two-step reaction: alanine is first activated by ATP to form Ala-AMP and then transferred to the acceptor end of tRNA(Ala). Also edits incorrectly charged Ser-tRNA(Ala) and Gly-tRNA(Ala) via its editing domain. The sequence is that of Alanine--tRNA ligase from Prochlorococcus marinus (strain AS9601).